The following is a 742-amino-acid chain: 5-methyltetrahydropteroyltriglutamate--homocysteine methyltransferase (742 aa).

Residues 18 to 21 (REWK) and K112 contribute to the 5-methyltetrahydropteroyltri-L-glutamate site. L-homocysteine-binding positions include 420–422 (IGS) and E473. L-methionine contacts are provided by residues 420–422 (IGS) and E473. W550 is a 5-methyltetrahydropteroyltri-L-glutamate binding site. D588 is a binding site for L-homocysteine. D588 contributes to the L-methionine binding site. 5-methyltetrahydropteroyltri-L-glutamate is bound at residue E594. Zn(2+) contacts are provided by H630, C632, and E654. The active-site Proton donor is H683. Position 715 (C715) interacts with Zn(2+).

Belongs to the vitamin-B12 independent methionine synthase family. Zn(2+) is required as a cofactor.

The catalysed reaction is 5-methyltetrahydropteroyltri-L-glutamate + L-homocysteine = tetrahydropteroyltri-L-glutamate + L-methionine. The protein operates within amino-acid biosynthesis; L-methionine biosynthesis via de novo pathway; L-methionine from L-homocysteine (MetE route): step 1/1. Catalyzes the transfer of a methyl group from 5-methyltetrahydrofolate to homocysteine resulting in methionine formation. In Staphylococcus aureus (strain bovine RF122 / ET3-1), this protein is 5-methyltetrahydropteroyltriglutamate--homocysteine methyltransferase.